The chain runs to 298 residues: Lipoyl synthase (298 aa).

[4Fe-4S] cluster contacts are provided by Cys-40, Cys-45, Cys-51, Cys-67, Cys-71, Cys-74, and Ser-280. The region spanning 53-269 is the Radical SAM core domain; the sequence is AVRKTATFMI…KEIALSKGFS (217 aa).

This sequence belongs to the radical SAM superfamily. Lipoyl synthase family. Requires [4Fe-4S] cluster as cofactor.

The protein resides in the cytoplasm. It carries out the reaction [[Fe-S] cluster scaffold protein carrying a second [4Fe-4S](2+) cluster] + N(6)-octanoyl-L-lysyl-[protein] + 2 oxidized [2Fe-2S]-[ferredoxin] + 2 S-adenosyl-L-methionine + 4 H(+) = [[Fe-S] cluster scaffold protein] + N(6)-[(R)-dihydrolipoyl]-L-lysyl-[protein] + 4 Fe(3+) + 2 hydrogen sulfide + 2 5'-deoxyadenosine + 2 L-methionine + 2 reduced [2Fe-2S]-[ferredoxin]. Its pathway is protein modification; protein lipoylation via endogenous pathway; protein N(6)-(lipoyl)lysine from octanoyl-[acyl-carrier-protein]. Functionally, catalyzes the radical-mediated insertion of two sulfur atoms into the C-6 and C-8 positions of the octanoyl moiety bound to the lipoyl domains of lipoate-dependent enzymes, thereby converting the octanoylated domains into lipoylated derivatives. This Bacillus thuringiensis (strain Al Hakam) protein is Lipoyl synthase.